Here is a 356-residue protein sequence, read N- to C-terminus: Histidinol-phosphate aminotransferase (356 aa).

At Lys214 the chain carries N6-(pyridoxal phosphate)lysine.

This sequence belongs to the class-II pyridoxal-phosphate-dependent aminotransferase family. Histidinol-phosphate aminotransferase subfamily. As to quaternary structure, homodimer. Pyridoxal 5'-phosphate is required as a cofactor.

The catalysed reaction is L-histidinol phosphate + 2-oxoglutarate = 3-(imidazol-4-yl)-2-oxopropyl phosphate + L-glutamate. It participates in amino-acid biosynthesis; L-histidine biosynthesis; L-histidine from 5-phospho-alpha-D-ribose 1-diphosphate: step 7/9. The chain is Histidinol-phosphate aminotransferase from Escherichia coli O1:K1 / APEC.